We begin with the raw amino-acid sequence, 433 residues long: Histidinol dehydrogenase (433 aa).

3 residues coordinate NAD(+): tyrosine 133, glutamine 194, and asparagine 217. 3 residues coordinate substrate: serine 240, glutamine 262, and histidine 265. Glutamine 262 and histidine 265 together coordinate Zn(2+). Residues glutamate 330 and histidine 331 each act as proton acceptor in the active site. Residues histidine 331, aspartate 364, glutamate 418, and histidine 423 each coordinate substrate. Zn(2+) is bound at residue aspartate 364. Residue histidine 423 participates in Zn(2+) binding.

It belongs to the histidinol dehydrogenase family. Zn(2+) is required as a cofactor.

The catalysed reaction is L-histidinol + 2 NAD(+) + H2O = L-histidine + 2 NADH + 3 H(+). Its pathway is amino-acid biosynthesis; L-histidine biosynthesis; L-histidine from 5-phospho-alpha-D-ribose 1-diphosphate: step 9/9. In terms of biological role, catalyzes the sequential NAD-dependent oxidations of L-histidinol to L-histidinaldehyde and then to L-histidine. The chain is Histidinol dehydrogenase from Hydrogenovibrio crunogenus (strain DSM 25203 / XCL-2) (Thiomicrospira crunogena).